We begin with the raw amino-acid sequence, 65 residues long: Large ribosomal subunit protein uL29 (65 aa).

It belongs to the universal ribosomal protein uL29 family.

This is Large ribosomal subunit protein uL29 from Mycoplasmopsis pulmonis (strain UAB CTIP) (Mycoplasma pulmonis).